The primary structure comprises 370 residues: uncharacterized protein (370 aa).

The protein belongs to the metallo-dependent hydrolases superfamily.

This is an uncharacterized protein from Mycobacterium bovis (strain ATCC BAA-935 / AF2122/97).